The sequence spans 617 residues: UvrABC system protein C (617 aa).

The region spanning 22–100 (KLPGVYRFFD…IKALSPKYNI (79 aa)) is the GIY-YIG domain. In terms of domain architecture, UVR spans 209-244 (DELTRTLQHKMQTAAANLQFEEAARYRDQIQALGII).

The protein belongs to the UvrC family. Interacts with UvrB in an incision complex.

It localises to the cytoplasm. In terms of biological role, the UvrABC repair system catalyzes the recognition and processing of DNA lesions. UvrC both incises the 5' and 3' sides of the lesion. The N-terminal half is responsible for the 3' incision and the C-terminal half is responsible for the 5' incision. This Neisseria gonorrhoeae (strain ATCC 700825 / FA 1090) protein is UvrABC system protein C.